Reading from the N-terminus, the 336-residue chain is MNTEATHDQNEALTTGARLRNAREQLGLSQQAVAERLCLKVSTVRDIEEDKAPADLASTFLRGYIRSYARLVHIPEEELLPGLEKQAPLRAAKVAPMQSFSLGKRRKKRDGWLMTFTWLVLFVVIGLSGAWWWQDHKAQQEEITTMADQSSAELNNNQSQSVPLDTSTTTDQAMATTPTSPVDTTATNTQTPAATTAPSPTVDSQQNAVVPPSQANVDTAATPAPAATTTPDGAAPLPTDQAGVTTPAVDPNALVMNFTADCWLEVTDATGKKLFSGMQRKDGNLNLTGQAPYKLKIGAPAAVQIQYQGKPVDLSRFIRTNQVARLTLNAEQSPAQ.

Residues 1–111 (MNTEATHDQN…LGKRRKKRDG (111 aa)) lie on the Cytoplasmic side of the membrane. Residues 19–71 (LRNAREQLGLSQQAVAERLCLKVSTVRDIEEDKAPADLASTFLRGYIRSYARL) form the HTH cro/C1-type domain. The H-T-H motif DNA-binding region spans 30-49 (QQAVAERLCLKVSTVRDIEE). A helical; Signal-anchor for type II membrane protein membrane pass occupies residues 112–132 (WLMTFTWLVLFVVIGLSGAWW). At 133–336 (WQDHKAQQEE…TLNAEQSPAQ (204 aa)) the chain is on the periplasmic side. The span at 148 to 164 (DQSSAELNNNQSQSVPL) shows a compositional bias: polar residues. The segment at 148 to 245 (DQSSAELNNN…PLPTDQAGVT (98 aa)) is disordered. Residues 165 to 201 (DTSTTTDQAMATTPTSPVDTTATNTQTPAATTAPSPT) show a composition bias toward low complexity. A compositionally biased stretch (polar residues) spans 202-217 (VDSQQNAVVPPSQANV). Over residues 218–240 (DTAATPAPAATTTPDGAAPLPTD) the composition is skewed to low complexity.

This sequence belongs to the RodZ family.

It is found in the cell inner membrane. Its function is as follows. Cytoskeletal protein that is involved in cell-shape control through regulation of the length of the long axis. This chain is Cytoskeleton protein RodZ, found in Escherichia coli O7:K1 (strain IAI39 / ExPEC).